The sequence spans 348 residues: Selenide, water dikinase (348 aa).

C17 is an active-site residue. ATP contacts are provided by residues K20 and 47 to 49 (THD). D50 is a binding site for Mg(2+). Residues D67, D90, and 138–140 (GHT) each bind ATP. D90 is a Mg(2+) binding site. A Mg(2+)-binding site is contributed by D226.

It belongs to the selenophosphate synthase 1 family. Class I subfamily. Homodimer. It depends on Mg(2+) as a cofactor.

It catalyses the reaction hydrogenselenide + ATP + H2O = selenophosphate + AMP + phosphate + 2 H(+). In terms of biological role, synthesizes selenophosphate from selenide and ATP. The chain is Selenide, water dikinase from Porphyromonas gingivalis (strain ATCC 33277 / DSM 20709 / CIP 103683 / JCM 12257 / NCTC 11834 / 2561).